The chain runs to 172 residues: Peptide deformylase (172 aa).

Cys91 and His133 together coordinate Fe cation. Glu134 is a catalytic residue. His137 contacts Fe cation.

It belongs to the polypeptide deformylase family. Fe(2+) serves as cofactor.

It catalyses the reaction N-terminal N-formyl-L-methionyl-[peptide] + H2O = N-terminal L-methionyl-[peptide] + formate. Removes the formyl group from the N-terminal Met of newly synthesized proteins. Requires at least a dipeptide for an efficient rate of reaction. N-terminal L-methionine is a prerequisite for activity but the enzyme has broad specificity at other positions. This chain is Peptide deformylase, found in Vibrio campbellii (strain ATCC BAA-1116).